The sequence spans 466 residues: Cysteine--tRNA ligase (466 aa).

Cys28 is a Zn(2+) binding site. The short motif at 30-40 (PTVYNYIHIGN) is the 'HIGH' region element. 3 residues coordinate Zn(2+): Cys208, His233, and Glu237. A 'KMSKS' region motif is present at residues 265-269 (KMSKS). Lys268 is a binding site for ATP.

Belongs to the class-I aminoacyl-tRNA synthetase family. As to quaternary structure, monomer. Zn(2+) is required as a cofactor.

The protein resides in the cytoplasm. The catalysed reaction is tRNA(Cys) + L-cysteine + ATP = L-cysteinyl-tRNA(Cys) + AMP + diphosphate. The chain is Cysteine--tRNA ligase from Staphylococcus aureus (strain MSSA476).